A 163-amino-acid chain; its full sequence is Nucleotide-binding protein Clos_1967 (163 aa).

This sequence belongs to the YajQ family.

Functionally, nucleotide-binding protein. The sequence is that of Nucleotide-binding protein Clos_1967 from Alkaliphilus oremlandii (strain OhILAs) (Clostridium oremlandii (strain OhILAs)).